A 458-amino-acid polypeptide reads, in one-letter code: Secretion-regulating guanine nucleotide exchange factor (458 aa).

RCC1 repeat units lie at residues 15–67 (AALF…VTDG), 68–119 (GDLF…LTEN), 120–171 (GQVL…ATAS), 172–230 (GIVF…LTDA), 231–283 (GEVY…QTET), 284–351 (GKMF…IIGG), and 352–402 (VCYS…LCQL). Residues 420–458 (DAIEDTESQKAMDKERNWKERQSETSTQSQSDWSRNGGL) are disordered. The segment covering 426 to 442 (ESQKAMDKERNWKERQS) has biased composition (basic and acidic residues). S427 is modified (phosphoserine).

In terms of assembly, interacts with SEC5. The interaction occurs only in the presence of magnesium or manganese and is stimulated by dCTP or GTP.

The protein localises to the cytoplasm. The protein resides in the nucleus. In terms of biological role, probable guanine nucleotide exchange factor (GEF), which may be involved in the secretion process. This is Secretion-regulating guanine nucleotide exchange factor (SERGEF) from Homo sapiens (Human).